The following is a 417-amino-acid chain: Odorant receptor 65a (417 aa).

Residues 1–62 (MTELRSERKN…MNSEQRRLPR (62 aa)) lie on the Cytoplasmic side of the membrane. The chain crosses the membrane as a helical span at residues 63–83 (IVAWQYFVSIQLATALASLFY). The Extracellular portion of the chain corresponds to 84-98 (GISESIGDIVNLGRD). The helical transmembrane segment at 99 to 119 (LVFIITIIFICFRLVFFAQYA) threads the bilayer. At 120 to 152 (GELDVIIDALEDIYHWSIKGPATKEVQETKRLH) the chain is on the cytoplasmic side. Residues 153–173 (FLLFMALIITWFSFLILFMLI) form a helical membrane-spanning segment. Residues 174 to 206 (KISTPFWIESQTLPFHVSWPFQLHDPSKHPIAY) are Extracellular-facing. Residues 207-227 (IIIFVSQSTTMLYFLIWLGVV) form a helical membrane-spanning segment. At 228–290 (ENMGVSLFFE…TDRCNHIFNG (63 aa)) the chain is on the cytoplasmic side. A helical transmembrane segment spans residues 291–311 (AFIMQMLINFLLVSLSLFEVL). Residues 312–316 (AAKKN) lie on the Extracellular side of the membrane. A helical membrane pass occupies residues 317–337 (PQVAVEYMIIMLMTLGHLSFW). Over 338–393 (SKFGDMFSKESEQVALAVYEAYDPNVGSKSIHRQFCFFIQRAQKPLIMKASPFPPF) the chain is Cytoplasmic. Residues 394–414 (NLENYMFILKQCYSILTILAN) traverse the membrane as a helical segment. Over 415-417 (TLE) the chain is Extracellular.

Belongs to the insect chemoreceptor superfamily. Heteromeric odorant receptor channel (TC 1.A.69) family. Or49a subfamily. As to quaternary structure, interacts with Orco. Complexes exist early in the endomembrane system in olfactory sensory neurons (OSNs), coupling these complexes to the conserved ciliary trafficking pathway. Expressed in olfactory sensory neurons in the antenna.

Its subcellular location is the cell membrane. In terms of biological role, odorant receptor which mediates acceptance or avoidance behavior, depending on its substrates. The odorant receptor repertoire encodes a large collection of odor stimuli that vary widely in identity, intensity, and duration. May form a complex with Orco to form odorant-sensing units, providing sensitive and prolonged odorant signaling and calcium permeability. Involved in olfactory communication for modulating aggression through the sensing of the male-specific pheromone 11-cis-vaccenyl acetate (cVA). Although acute exposure to cVA elicites aggression through Or67d olfactory receptor neurons (ORNs), chronic cVA exposure reduces aggression through Or65a ORNs. Moreover, cVA leads to generalized learning with mated females. It is a major component of the male cuticular hydrocarbon profile, but it is not found on virgin females. During copulation, cVA is transferred to the female in ejaculate along with sperm and peptides that decrease her sexual receptivity. The protein is Odorant receptor 65a (Or65a) of Drosophila melanogaster (Fruit fly).